The chain runs to 145 residues: Large ribosomal subunit protein uL11 (145 aa).

This sequence belongs to the universal ribosomal protein uL11 family. Part of the ribosomal stalk of the 50S ribosomal subunit. Interacts with L10 and the large rRNA to form the base of the stalk. L10 forms an elongated spine to which L12 dimers bind in a sequential fashion forming a multimeric L10(L12)X complex. One or more lysine residues are methylated.

Forms part of the ribosomal stalk which helps the ribosome interact with GTP-bound translation factors. The chain is Large ribosomal subunit protein uL11 from Rickettsia akari (strain Hartford).